The sequence spans 207 residues: Glycerol-3-phosphate acyltransferase (207 aa).

5 helical membrane-spanning segments follow: residues 3 to 23 (LIGLLIVAYLLGAIPNGVWVG), 54 to 74 (TIVMVLDIAKGSVATLLPIVF), 81 to 101 (GTATPLLFGLFAVLGHTVSIF), 122 to 142 (PIMFVIAAGFWVSLIYWTSIV), and 158 to 178 (LVFQDWYLTGIALVLTVFVFY).

It belongs to the PlsY family. Probably interacts with PlsX.

The protein resides in the cell membrane. The enzyme catalyses an acyl phosphate + sn-glycerol 3-phosphate = a 1-acyl-sn-glycero-3-phosphate + phosphate. It functions in the pathway lipid metabolism; phospholipid metabolism. Its function is as follows. Catalyzes the transfer of an acyl group from acyl-phosphate (acyl-PO(4)) to glycerol-3-phosphate (G3P) to form lysophosphatidic acid (LPA). This enzyme utilizes acyl-phosphate as fatty acyl donor, but not acyl-CoA or acyl-ACP. This is Glycerol-3-phosphate acyltransferase from Levilactobacillus brevis (strain ATCC 367 / BCRC 12310 / CIP 105137 / JCM 1170 / LMG 11437 / NCIMB 947 / NCTC 947) (Lactobacillus brevis).